The chain runs to 430 residues: tRNA(Ile)-lysidine synthase (430 aa).

ATP is bound at residue 27 to 32 (SGGSDS).

This sequence belongs to the tRNA(Ile)-lysidine synthase family.

It is found in the cytoplasm. It carries out the reaction cytidine(34) in tRNA(Ile2) + L-lysine + ATP = lysidine(34) in tRNA(Ile2) + AMP + diphosphate + H(+). Its function is as follows. Ligates lysine onto the cytidine present at position 34 of the AUA codon-specific tRNA(Ile) that contains the anticodon CAU, in an ATP-dependent manner. Cytidine is converted to lysidine, thus changing the amino acid specificity of the tRNA from methionine to isoleucine. The chain is tRNA(Ile)-lysidine synthase from Rickettsia prowazekii (strain Madrid E).